A 571-amino-acid polypeptide reads, in one-letter code: Sulfite reductase [NADPH] hemoprotein beta-component (571 aa).

[4Fe-4S] cluster contacts are provided by Cys435, Cys441, Cys480, and Cys484. Position 484 (Cys484) interacts with siroheme.

Belongs to the nitrite and sulfite reductase 4Fe-4S domain family. Alpha(8)-beta(8). The alpha component is a flavoprotein, the beta component is a hemoprotein. It depends on siroheme as a cofactor. [4Fe-4S] cluster is required as a cofactor.

It catalyses the reaction hydrogen sulfide + 3 NADP(+) + 3 H2O = sulfite + 3 NADPH + 4 H(+). It participates in sulfur metabolism; hydrogen sulfide biosynthesis; hydrogen sulfide from sulfite (NADPH route): step 1/1. In terms of biological role, component of the sulfite reductase complex that catalyzes the 6-electron reduction of sulfite to sulfide. This is one of several activities required for the biosynthesis of L-cysteine from sulfate. This chain is Sulfite reductase [NADPH] hemoprotein beta-component, found in Erwinia tasmaniensis (strain DSM 17950 / CFBP 7177 / CIP 109463 / NCPPB 4357 / Et1/99).